The following is a 361-amino-acid chain: Transposase A from transposon Tn554 (361 aa).

The Core-binding (CB) domain occupies 23 to 120; that stretch reads YQLIEPVMKF…VVMSFLDYLS (98 aa). The 189-residue stretch at 163–351 folds into the Tyr recombinase domain; sequence KQIRTLRSKE…SDQDMKNEFN (189 aa). Active-site residues include R198, K232, H302, R305, and H328. The O-(3'-phospho-DNA)-tyrosine intermediate role is filled by Y338.

This sequence belongs to the 'phage' integrase family.

Functionally, one of three proteins encoded by transposon Tn554 required for its transposition. This chain is Transposase A from transposon Tn554 (tnpA1), found in Staphylococcus aureus (strain Mu50 / ATCC 700699).